The following is a 916-amino-acid chain: Isoleucine--tRNA ligase (916 aa).

The 'HIGH' region signature appears at 57 to 67 (PYANGNLHMGH). Glu-554 is a binding site for L-isoleucyl-5'-AMP. The 'KMSKS' region motif lies at 595–599 (KMSKS). Position 598 (Lys-598) interacts with ATP. Zn(2+) contacts are provided by Cys-885, Cys-888, Cys-905, and Cys-908.

The protein belongs to the class-I aminoacyl-tRNA synthetase family. IleS type 1 subfamily. Monomer. Zn(2+) is required as a cofactor.

The protein resides in the cytoplasm. It carries out the reaction tRNA(Ile) + L-isoleucine + ATP = L-isoleucyl-tRNA(Ile) + AMP + diphosphate. In terms of biological role, catalyzes the attachment of isoleucine to tRNA(Ile). As IleRS can inadvertently accommodate and process structurally similar amino acids such as valine, to avoid such errors it has two additional distinct tRNA(Ile)-dependent editing activities. One activity is designated as 'pretransfer' editing and involves the hydrolysis of activated Val-AMP. The other activity is designated 'posttransfer' editing and involves deacylation of mischarged Val-tRNA(Ile). This chain is Isoleucine--tRNA ligase (ileS), found in Staphylococcus epidermidis (strain ATCC 35984 / DSM 28319 / BCRC 17069 / CCUG 31568 / BM 3577 / RP62A).